The sequence spans 604 residues: Afamin (604 aa).

The signal sequence occupies residues 1 to 21 (MKQLKLTGFVIFFFFLTESLT). 3 consecutive Albumin domains span residues 22 to 210 (LPTQ…EPFI), 211 to 403 (YYLK…RFNE), and 404 to 598 (TTEK…PKLA). Intrachain disulfides connect Cys77–Cys86, Cys99–Cys114, Cys113–Cys124, Cys148–Cys193, Cys192–Cys201, Cys224–Cys270, Cys269–Cys277, Cys289–Cys303, Cys302–Cys313, Cys340–Cys385, Cys384–Cys393, Cys416–Cys462, Cys461–Cys470, Cys483–Cys499, Cys498–Cys509, Cys536–Cys581, and Cys580–Cys589. The N-linked (GlcNAc...) asparagine glycan is linked to Asn109. The binding pocket for hydrophobic ligands stretch occupies residues 215 to 319 (ALSSYQKNAC…RGECIIYSNK (105 aa)). A glycan (N-linked (GlcNAc...) asparagine) is linked at Asn434.

It belongs to the ALB/AFP/VDB family. As to quaternary structure, forms a 1:1 complex with Wnt family members; interacts with WNT3A and WNT5A. Interacts with WNT1, WNT2B, WNT3, WNT7A, WNT7B, WNT8, WNT9A, WNT9B, WNT10A and WNT10B. In terms of processing, N-glycosylated; more than 90% of the glycans are sialylated.

It is found in the secreted. Functionally, functions as a carrier for hydrophobic molecules in body fluids. Essential for the solubility and activity of lipidated Wnt family members, including WNT1, WNT2B, WNT3, WNT3A, WNT5A, WNT7A, WNT7B, WNT8, WNT9A, WNT9B, WNT10A and WNT10B. Binds vitamin E. May transport vitamin E in body fluids under conditions where the lipoprotein system is not sufficient. May be involved in the transport of vitamin E across the blood-brain barrier. This chain is Afamin (AFM), found in Bos taurus (Bovine).